We begin with the raw amino-acid sequence, 402 residues long: 1-deoxy-D-xylulose 5-phosphate reductoisomerase (402 aa).

5 residues coordinate NADPH: T13, G14, S15, I16, and N126. A 1-deoxy-D-xylulose 5-phosphate-binding site is contributed by K127. E128 is an NADPH binding site. D152 serves as a coordination point for Mn(2+). 1-deoxy-D-xylulose 5-phosphate is bound by residues S153, E154, S188, and H211. E154 provides a ligand contact to Mn(2+). G217 contributes to the NADPH binding site. 1-deoxy-D-xylulose 5-phosphate-binding residues include S224, N229, K230, and E233. Mn(2+) is bound at residue E233.

Belongs to the DXR family. The cofactor is Mg(2+). Mn(2+) serves as cofactor.

The enzyme catalyses 2-C-methyl-D-erythritol 4-phosphate + NADP(+) = 1-deoxy-D-xylulose 5-phosphate + NADPH + H(+). Its pathway is isoprenoid biosynthesis; isopentenyl diphosphate biosynthesis via DXP pathway; isopentenyl diphosphate from 1-deoxy-D-xylulose 5-phosphate: step 1/6. Functionally, catalyzes the NADPH-dependent rearrangement and reduction of 1-deoxy-D-xylulose-5-phosphate (DXP) to 2-C-methyl-D-erythritol 4-phosphate (MEP). This is 1-deoxy-D-xylulose 5-phosphate reductoisomerase from Psychrobacter cryohalolentis (strain ATCC BAA-1226 / DSM 17306 / VKM B-2378 / K5).